The following is a 652-amino-acid chain: Bifunctional protein ThiO/ThiG (652 aa).

Residues M1–S366 are thiO. Residues I5–V19 and A44–M46 each bind FAD. Glycine is bound at residue E52. V173 serves as a coordination point for FAD. Positions 301 and 327 each coordinate glycine. H325–L331 is an FAD binding site. The segment at S393–S652 is thiG. Residue K494 is the Schiff-base intermediate with DXP of the active site. Residues G555, A581–G582, and N603–S604 each bind 1-deoxy-D-xylulose 5-phosphate.

It in the N-terminal section; belongs to the DAO family. ThiO subfamily. The protein in the C-terminal section; belongs to the ThiG family. Interacts with ThiH and ThiS. It depends on FAD as a cofactor.

It localises to the cytoplasm. The catalysed reaction is glycine + O2 + H2O = glyoxylate + H2O2 + NH4(+). It carries out the reaction [ThiS sulfur-carrier protein]-C-terminal-Gly-aminoethanethioate + 2-iminoacetate + 1-deoxy-D-xylulose 5-phosphate = [ThiS sulfur-carrier protein]-C-terminal Gly-Gly + 2-[(2R,5Z)-2-carboxy-4-methylthiazol-5(2H)-ylidene]ethyl phosphate + 2 H2O + H(+). It participates in cofactor biosynthesis; thiamine diphosphate biosynthesis. Functionally, catalyzes the FAD-dependent oxidative deamination of glycine. Is essential for thiamine biosynthesis since the oxidation of glycine catalyzed by ThiO generates the glycine imine intermediate (dehydroglycine) required for the biosynthesis of the thiazole ring of thiamine pyrophosphate. Its function is as follows. Catalyzes the rearrangement of 1-deoxy-D-xylulose 5-phosphate (DXP) to produce the thiazole phosphate moiety of thiamine. Sulfur is provided by the thiocarboxylate moiety of the carrier protein ThiS. In vitro, sulfur can be provided by H(2)S. The polypeptide is Bifunctional protein ThiO/ThiG (thiO/thiG) (Trichormus variabilis (strain ATCC 29413 / PCC 7937) (Anabaena variabilis)).